Reading from the N-terminus, the 348-residue chain is Uroporphyrinogen decarboxylase (348 aa).

Substrate-binding positions include 27-31, Phe46, Asp76, Tyr152, Ser207, and His320; that span reads RQAGR.

It belongs to the uroporphyrinogen decarboxylase family. As to quaternary structure, homodimer.

Its subcellular location is the cytoplasm. It catalyses the reaction uroporphyrinogen III + 4 H(+) = coproporphyrinogen III + 4 CO2. Its pathway is porphyrin-containing compound metabolism; protoporphyrin-IX biosynthesis; coproporphyrinogen-III from 5-aminolevulinate: step 4/4. Functionally, catalyzes the decarboxylation of four acetate groups of uroporphyrinogen-III to yield coproporphyrinogen-III. The chain is Uroporphyrinogen decarboxylase from Bacillus cereus (strain G9842).